A 799-amino-acid polypeptide reads, in one-letter code: Oligopeptide transporter 1 (799 aa).

Disordered regions lie at residues methionine 1 to isoleucine 26 and aspartate 43 to aspartate 64. Residues methionine 1–arginine 108 lie on the Extracellular side of the membrane. The span at serine 13–isoleucine 26 shows a compositional bias: low complexity. The N-linked (GlcNAc...) asparagine glycan is linked to asparagine 46. Phosphothreonine occurs at positions 48, 50, and 51. Residues threonine 109 to leucine 129 traverse the membrane as a helical segment. Residues arginine 130–glutamate 135 lie on the Cytoplasmic side of the membrane. A helical membrane pass occupies residues isoleucine 136–proline 156. Topologically, residues aspartate 157 to glutamate 177 are extracellular. The helical transmembrane segment at histidine 178 to leucine 198 threads the bilayer. At asparagine 199–asparagine 210 the chain is on the cytoplasmic side. A helical transmembrane segment spans residues valine 211 to leucine 231. Topologically, residues threonine 232–arginine 276 are extracellular. Residues phenylalanine 277 to threonine 297 form a helical membrane-spanning segment. Residues glycine 298–histidine 313 lie on the Cytoplasmic side of the membrane. A helical transmembrane segment spans residues asparagine 314–phenylalanine 334. The Extracellular portion of the chain corresponds to aspartate 335–tyrosine 359. A helical membrane pass occupies residues alanine 360 to tyrosine 380. At alanine 381 to tyrosine 428 the chain is on the cytoplasmic side. A helical transmembrane segment spans residues leucine 429–tyrosine 449. Over histidine 450–aspartate 482 the chain is Extracellular. The helical transmembrane segment at tryptophan 483–phenylalanine 503 threads the bilayer. Residues aspartate 504–proline 508 are Cytoplasmic-facing. Residues alanine 509–leucine 529 traverse the membrane as a helical segment. Residues glutamate 530 to asparagine 540 are Extracellular-facing. Residues isoleucine 541 to phenylalanine 561 form a helical membrane-spanning segment. Residues lysine 562 to arginine 590 are Cytoplasmic-facing. The helical transmembrane segment at leucine 591–glutamine 611 threads the bilayer. Topologically, residues glutamate 612–asparagine 659 are extracellular. A glycan (N-linked (GlcNAc...) asparagine) is linked at asparagine 640. Residues proline 660–tryptophan 680 form a helical membrane-spanning segment. Topologically, residues lysine 681–asparagine 736 are cytoplasmic. Residues phenylalanine 737–cysteine 757 traverse the membrane as a helical segment. Over valine 758–tryptophan 799 the chain is Extracellular.

The protein belongs to the oligopeptide OPT transporter family.

It localises to the cell membrane. Functionally, high affinity transporter for glutathione. Also transports tetra- and pentapeptides like the opioids leucine enkephalin (Tyr-Gly-Gly-Phe-Leu) and methionine enkephalin (Tyr-Gly-Gly_Phe-Met) across the cell membrane. The polypeptide is Oligopeptide transporter 1 (OPT1) (Saccharomyces cerevisiae (strain ATCC 204508 / S288c) (Baker's yeast)).